The primary structure comprises 380 residues: N5-carboxyaminoimidazole ribonucleotide synthase (380 aa).

Residues Arg108, Lys148, 153 to 159 (GYDGKGQ), 183 to 186 (ESWV), Glu191, His214, and 268 to 269 (NE) each bind ATP. The 187-residue stretch at 112-298 (KKAIQSAGCE…QFEQHIRAVC (187 aa)) folds into the ATP-grasp domain.

The protein belongs to the PurK/PurT family. Homodimer.

The enzyme catalyses 5-amino-1-(5-phospho-beta-D-ribosyl)imidazole + hydrogencarbonate + ATP = 5-carboxyamino-1-(5-phospho-D-ribosyl)imidazole + ADP + phosphate + 2 H(+). Its pathway is purine metabolism; IMP biosynthesis via de novo pathway; 5-amino-1-(5-phospho-D-ribosyl)imidazole-4-carboxylate from 5-amino-1-(5-phospho-D-ribosyl)imidazole (N5-CAIR route): step 1/2. Catalyzes the ATP-dependent conversion of 5-aminoimidazole ribonucleotide (AIR) and HCO(3)(-) to N5-carboxyaminoimidazole ribonucleotide (N5-CAIR). The sequence is that of N5-carboxyaminoimidazole ribonucleotide synthase from Bacillus subtilis (strain 168).